A 63-amino-acid chain; its full sequence is Toxin S6C6 (63 aa).

5 cysteine pairs are disulfide-bonded: Cys-3–Cys-24, Cys-6–Cys-11, Cys-17–Cys-39, Cys-43–Cys-55, and Cys-56–Cys-61.

This sequence belongs to the three-finger toxin family. Ancestral subfamily. Orphan group XIX sub-subfamily. Expressed by the venom gland.

The protein localises to the secreted. In terms of biological role, may enhance presynaptic acetylcholine release. The chain is Toxin S6C6 from Dendroaspis jamesoni kaimosae (Eastern Jameson's mamba).